The following is a 163-amino-acid chain: Nucleotide-binding protein MT0592 (163 aa).

Belongs to the YajQ family.

In terms of biological role, nucleotide-binding protein. The protein is Nucleotide-binding protein MT0592 of Mycobacterium tuberculosis (strain CDC 1551 / Oshkosh).